Here is a 959-residue protein sequence, read N- to C-terminus: Translation initiation factor IF-2 (959 aa).

Residues 1–10 (MSDKTNDDKT) show a composition bias toward basic and acidic residues. Positions 1 to 374 (MSDKTNDDKT…SQMQETREKI (374 aa)) are disordered. A compositionally biased stretch (polar residues) spans 27–37 (EQSTVRQNFSH). Low complexity-rich tracts occupy residues 63–118 (AAAA…VTKP) and 128–138 (QRPGGQQAQRP). Basic and acidic residues-rich tracts occupy residues 154–225 (SEMD…EAAK) and 232–241 (ARSERRDDAR). Residues 246 to 284 (GARPQQAGRPQGGRPQPAGRPQQGSPRPAPIIADAAPIA) show a composition bias toward low complexity. Over residues 318 to 333 (PEVRAPKVVKGEDDRR) the composition is skewed to basic and acidic residues. The tr-type G domain maps to 457–626 (SRPPVVTIMG…LLQAEMLDLK (170 aa)). The G1 stretch occupies residues 466–473 (GHVDHGKT). 466–473 (GHVDHGKT) is a binding site for GTP. The tract at residues 491 to 495 (GITQH) is G2. A G3 region spans residues 512 to 515 (DTPG). GTP is bound by residues 512–516 (DTPGH) and 566–569 (NKID). A G4 region spans residues 566–569 (NKID). Residues 602–604 (SAK) are G5.

The protein belongs to the TRAFAC class translation factor GTPase superfamily. Classic translation factor GTPase family. IF-2 subfamily.

The protein resides in the cytoplasm. In terms of biological role, one of the essential components for the initiation of protein synthesis. Protects formylmethionyl-tRNA from spontaneous hydrolysis and promotes its binding to the 30S ribosomal subunits. Also involved in the hydrolysis of GTP during the formation of the 70S ribosomal complex. The sequence is that of Translation initiation factor IF-2 from Brucella ovis (strain ATCC 25840 / 63/290 / NCTC 10512).